The sequence spans 382 residues: Pentraxin-related protein PTX3 (382 aa).

An N-terminal signal peptide occupies residues 1 to 17; it reads MHISVILFCALWSAVSA. Residues 79 to 137 adopt a coiled-coil conformation; that stretch reads VMLRGELQKLQAELGRLEGSLQKLCGPEAPSETRLARALDDLLQASRDAGRRLARLEDA. 2 disulfides stabilise this stretch: Cys180/Cys358 and Cys211/Cys272. One can recognise a Pentraxin (PTX) domain in the interval 180-382; sequence CETAILFPMR…QPHGGAQYVY (203 aa). Asn221 carries an N-linked (GlcNAc...) asparagine glycan.

As to quaternary structure, homooctamer; disulfide-linked. Binds to C1q.

It is found in the secreted. Its function is as follows. Plays a role in the regulation of innate resistance to pathogens, inflammatory reactions, possibly clearance of self-components and female fertility. The chain is Pentraxin-related protein PTX3 (PTX3) from Bos taurus (Bovine).